The primary structure comprises 795 residues: Phenylalanine--tRNA ligase beta subunit (795 aa).

The tRNA-binding domain maps to 39 to 148 (AGTFNGVVVG…LDAPIGTDLR (110 aa)). One can recognise a B5 domain in the interval 401–476 (PKVNTVQLRR…RIYGYNSIPN (76 aa)). The Mg(2+) site is built by D454, D460, E463, and E464. The 94-residue stretch at 701-794 (SKFPANRRDL…VKQRFNAELR (94 aa)) folds into the FDX-ACB domain.

The protein belongs to the phenylalanyl-tRNA synthetase beta subunit family. Type 1 subfamily. As to quaternary structure, tetramer of two alpha and two beta subunits. The cofactor is Mg(2+).

Its subcellular location is the cytoplasm. It catalyses the reaction tRNA(Phe) + L-phenylalanine + ATP = L-phenylalanyl-tRNA(Phe) + AMP + diphosphate + H(+). In Haemophilus influenzae (strain 86-028NP), this protein is Phenylalanine--tRNA ligase beta subunit.